Here is a 1224-residue protein sequence, read N- to C-terminus: Serine/threonine-protein kinase CST20 (1224 aa).

The span at 1-18 (MSILSENNPTPTSITDPN) shows a compositional bias: polar residues. 2 disordered regions span residues 1–378 (MSIL…TAHN) and 403–464 (TNSS…HSQE). Composition is skewed to low complexity over residues 57-70 (NTTSANTSSLSLGS) and 95-119 (DSGSGDIDDSQQSHNNNNNESNPES). Over residues 144–155 (HQGDDSDNEKQY) the composition is skewed to basic and acidic residues. 3 stretches are compositionally biased toward polar residues: residues 169–191 (DSYSLGTLESPGTLNALETNNVS), 201–218 (TSSLEDLSLSLQHQNENA), and 231–240 (PTSKTSSFHD). Positions 242–251 (SSVISSSTSV) are enriched in low complexity. 2 stretches are compositionally biased toward polar residues: residues 256 to 271 (SNPTSTRGSHLSSYKS) and 305 to 324 (DTLSSATNSPNLLRNDTLQG). Low complexity-rich tracts occupy residues 343–375 (NTSATSRNTSGTSTSTVVKNSRSGTSKSTSTST) and 433–462 (KVRGVFSSMFGKNKSTSSSSSSNSGSNSHS). Positions 469-482 (ISTPFNAKHLAHVG) constitute a CRIB domain. 2 disordered regions span residues 539–825 (FHFD…ALAD) and 861–913 (LREK…KQAA). A compositionally biased stretch (polar residues) spans 544–555 (NKSSSSGWSNEN). The segment covering 564–575 (SNSGSGSGGGGA) has biased composition (gly residues). Positions 598-607 (ITPSQSMPTK) are enriched in polar residues. Residues 608–622 (TESKQSENQHPHEDN) show a composition bias toward basic and acidic residues. Positions 623 to 636 (ATQYTPRTPTSHVQ) are enriched in polar residues. 3 stretches are compositionally biased toward low complexity: residues 664 to 677 (PSSQSLPRSDSQSD), 690 to 704 (SPSKIKIRSISSKSL), and 730 to 743 (SIPKSKSHSASLSS). The segment covering 744–755 (QLRPATNGSTTA) has biased composition (polar residues). Pro residues predominate over residues 783–801 (APPPPPSAPPAPPVPPAPP). Residues 805–820 (LSEQTSEIPQQRTAPS) show a composition bias toward polar residues. The span at 861-870 (LREKNERQNR) shows a compositional bias: basic and acidic residues. Positions 871–886 (QQETGQNNADTASGGS) are enriched in polar residues. The region spanning 947–1199 (YVDLVKIGQG…ADELLHDNFI (253 aa)) is the Protein kinase domain. ATP is bound by residues 953 to 961 (IGQGASGGV) and K977. D1067 functions as the Proton acceptor in the catalytic mechanism.

It belongs to the protein kinase superfamily. STE Ser/Thr protein kinase family. STE20 subfamily.

Its subcellular location is the cytoplasm. The protein localises to the nucleus. It carries out the reaction L-seryl-[protein] + ATP = O-phospho-L-seryl-[protein] + ADP + H(+). The enzyme catalyses L-threonyl-[protein] + ATP = O-phospho-L-threonyl-[protein] + ADP + H(+). Its function is as follows. MAP4K component of the MAPK pathway required for the mating pheromone response, and the regulation of cell polarity and cell cycle. Phosphorylates histone H2B to form H2BS10ph. Required for hyphal formation and virulence. The protein is Serine/threonine-protein kinase CST20 (CST20) of Candida albicans (strain WO-1) (Yeast).